Consider the following 153-residue polypeptide: Transcription antitermination protein NusB (153 aa).

It belongs to the NusB family.

Functionally, involved in transcription antitermination. Required for transcription of ribosomal RNA (rRNA) genes. Binds specifically to the boxA antiterminator sequence of the ribosomal RNA (rrn) operons. The protein is Transcription antitermination protein NusB of Nitratidesulfovibrio vulgaris (strain ATCC 29579 / DSM 644 / CCUG 34227 / NCIMB 8303 / VKM B-1760 / Hildenborough) (Desulfovibrio vulgaris).